A 391-amino-acid polypeptide reads, in one-letter code: Na(+)/H(+) antiporter NhaA (391 aa).

The next 11 helical transmembrane spans lie at 14-34 (AGGI…NSPL), 47-67 (FGMS…FLLI), 87-107 (IFPA…YVAF), 117-137 (GWAI…ALLG), 146-166 (VFLL…IALF), 171-191 (LSTM…MLNA), 205-225 (AILW…GVVI), 252-272 (VAFG…LEGV), 280-300 (MLPL…IFTF), 318-338 (FIHI…SIFI), and 356-376 (LGIL…LHFS).

It belongs to the NhaA Na(+)/H(+) (TC 2.A.33) antiporter family.

It is found in the cell inner membrane. It catalyses the reaction Na(+)(in) + 2 H(+)(out) = Na(+)(out) + 2 H(+)(in). Functionally, na(+)/H(+) antiporter that extrudes sodium in exchange for external protons. The sequence is that of Na(+)/H(+) antiporter NhaA from Vibrio campbellii (strain ATCC BAA-1116).